A 464-amino-acid polypeptide reads, in one-letter code: Siroheme synthase (464 aa).

The segment at 1 to 203 is precorrin-2 dehydrogenase /sirohydrochlorin ferrochelatase; sequence MEFLPLFHNL…GQGDEAERLL (203 aa). Residues 22-23 and 43-44 contribute to the NAD(+) site; these read EI and PQ. Ser-128 is modified (phosphoserine). Residues 216–464 form a uroporphyrinogen-III C-methyltransferase region; that stretch reads GEVYLVGAGP…KWFEGAQSQV (249 aa). Pro-225 contacts S-adenosyl-L-methionine. The active-site Proton acceptor is the Asp-248. Lys-270 (proton donor) is an active-site residue. S-adenosyl-L-methionine is bound by residues 301-303, Ile-306, 331-332, Met-383, and Gly-412; these read GGD and TA.

In the N-terminal section; belongs to the precorrin-2 dehydrogenase / sirohydrochlorin ferrochelatase family. This sequence in the C-terminal section; belongs to the precorrin methyltransferase family.

It catalyses the reaction uroporphyrinogen III + 2 S-adenosyl-L-methionine = precorrin-2 + 2 S-adenosyl-L-homocysteine + H(+). It carries out the reaction precorrin-2 + NAD(+) = sirohydrochlorin + NADH + 2 H(+). The catalysed reaction is siroheme + 2 H(+) = sirohydrochlorin + Fe(2+). It functions in the pathway cofactor biosynthesis; adenosylcobalamin biosynthesis; precorrin-2 from uroporphyrinogen III: step 1/1. It participates in cofactor biosynthesis; adenosylcobalamin biosynthesis; sirohydrochlorin from precorrin-2: step 1/1. The protein operates within porphyrin-containing compound metabolism; siroheme biosynthesis; precorrin-2 from uroporphyrinogen III: step 1/1. Its pathway is porphyrin-containing compound metabolism; siroheme biosynthesis; siroheme from sirohydrochlorin: step 1/1. It functions in the pathway porphyrin-containing compound metabolism; siroheme biosynthesis; sirohydrochlorin from precorrin-2: step 1/1. Functionally, multifunctional enzyme that catalyzes the SAM-dependent methylations of uroporphyrinogen III at position C-2 and C-7 to form precorrin-2 via precorrin-1. Then it catalyzes the NAD-dependent ring dehydrogenation of precorrin-2 to yield sirohydrochlorin. Finally, it catalyzes the ferrochelation of sirohydrochlorin to yield siroheme. The polypeptide is Siroheme synthase (Pseudomonas fluorescens (strain SBW25)).